A 311-amino-acid polypeptide reads, in one-letter code: Phospho-N-acetylmuramoyl-pentapeptide-transferase (311 aa).

10 helical membrane-spanning segments follow: residues 2 to 22, 48 to 68, 74 to 94, 104 to 124, 144 to 164, 168 to 188, 192 to 212, 214 to 234, 237 to 257, and 288 to 308; these read ENNVIVFFLSFLSSVVFIEGF, GTPTAAGLVFIPIFIAVLLNF, SFLIAFSALSYGLIGAIDDFM, ITAVQKLFMQFTAAFIIVYFI, LGWFYYLLSSVVIVGVSNAVN, GVDGLAGFVFIGSIVPLLIVG, VVYLSLIGLLMGFLWHNWHPA, IFMGDAGSLALGGILATSFAL, LELFLIFFGFIFLLETLSVII, and KIAFRFSTLALLVSLLGIIGW.

This sequence belongs to the glycosyltransferase 4 family. MraY subfamily. Mg(2+) is required as a cofactor.

Its subcellular location is the cell inner membrane. It catalyses the reaction UDP-N-acetyl-alpha-D-muramoyl-L-alanyl-gamma-D-glutamyl-meso-2,6-diaminopimeloyl-D-alanyl-D-alanine + di-trans,octa-cis-undecaprenyl phosphate = di-trans,octa-cis-undecaprenyl diphospho-N-acetyl-alpha-D-muramoyl-L-alanyl-D-glutamyl-meso-2,6-diaminopimeloyl-D-alanyl-D-alanine + UMP. The protein operates within cell wall biogenesis; peptidoglycan biosynthesis. Its function is as follows. Catalyzes the initial step of the lipid cycle reactions in the biosynthesis of the cell wall peptidoglycan: transfers peptidoglycan precursor phospho-MurNAc-pentapeptide from UDP-MurNAc-pentapeptide onto the lipid carrier undecaprenyl phosphate, yielding undecaprenyl-pyrophosphoryl-MurNAc-pentapeptide, known as lipid I. The protein is Phospho-N-acetylmuramoyl-pentapeptide-transferase of Kosmotoga olearia (strain ATCC BAA-1733 / DSM 21960 / TBF 19.5.1).